The primary structure comprises 1700 residues: Balbiani ring protein 3 (1700 aa).

The first 20 residues, 1–20 (MKTLSSLLLVLAVNVLLIQA), serve as a signal peptide directing secretion.

Salivary gland.

It localises to the secreted. Its function is as follows. Used by the larvae to construct a supramolecular structure, the larval tube. Balbiani ring protein 3 could play a role as a transport protein that binds to other proteins intracellularly and in the gland lumen in order to prevent these from forming water-insoluble fibers too early. The chain is Balbiani ring protein 3 (BR3) from Chironomus tentans (Midge).